We begin with the raw amino-acid sequence, 222 residues long: CEACAM1-like protein UL7 (222 aa).

Asn-50, Asn-56, Asn-60, Asn-71, Asn-105, Asn-109, Asn-125, Asn-132, Asn-147, Asn-164, Asn-168, and Asn-189 each carry an N-linked (GlcNAc...) asparagine; by host glycan. The chain crosses the membrane as a helical span at residues 193-213; it reads LALVGVIVFIALIVVCIMGWW.

It belongs to the RL11 family. Interacts with host FLT3. Post-translationally, highly glycosylated.

The protein localises to the secreted. Its subcellular location is the host cell membrane. In terms of biological role, plays a role in modulating the host immune response and affecting host cytokine production. Structurally and functionally homolog of host CEACAM1, induces endothelial cell angiogenesis. Ligands for host FLT3 receptor, activates the PI3K/AKT and MAPK/ERK pathways. In turn, triggers hematopoietic progenitor cell and monocyte differentiation leading to virus reactivation. The chain is CEACAM1-like protein UL7 (UL7) from Human cytomegalovirus (strain AD169) (HHV-5).